The following is a 115-amino-acid chain: Nitrogenase-stabilizing/protective protein NifW (115 aa).

The protein belongs to the NifW family. In terms of assembly, homotrimer; associates with NifD.

In terms of biological role, may protect the nitrogenase Fe-Mo protein from oxidative damage. This chain is Nitrogenase-stabilizing/protective protein NifW, found in Rhodopseudomonas palustris (strain BisB18).